We begin with the raw amino-acid sequence, 357 residues long: Holliday junction branch migration complex subunit RuvB (357 aa).

Residues 4 to 195 form a large ATPase domain (RuvB-L) region; the sequence is TDKLAAKAVS…FGIVARLEFY (192 aa). ATP contacts are provided by residues L34, R35, G76, K79, T80, T81, 142–144, R185, Y195, and R232; that span reads EDY. T80 is a binding site for Mg(2+). Residues 196–266 form a small ATPAse domain (RuvB-S) region; the sequence is TPTELARIVT…VADAALAMLD (71 aa). Residues 269–357 are head domain (RuvB-H); sequence AVGFDLMDRK…PARDLWDNNA (89 aa). Positions 305, 324, and 329 each coordinate DNA.

The protein belongs to the RuvB family. As to quaternary structure, homohexamer. Forms an RuvA(8)-RuvB(12)-Holliday junction (HJ) complex. HJ DNA is sandwiched between 2 RuvA tetramers; dsDNA enters through RuvA and exits via RuvB. An RuvB hexamer assembles on each DNA strand where it exits the tetramer. Each RuvB hexamer is contacted by two RuvA subunits (via domain III) on 2 adjacent RuvB subunits; this complex drives branch migration. In the full resolvosome a probable DNA-RuvA(4)-RuvB(12)-RuvC(2) complex forms which resolves the HJ.

It localises to the cytoplasm. It carries out the reaction ATP + H2O = ADP + phosphate + H(+). Its function is as follows. The RuvA-RuvB-RuvC complex processes Holliday junction (HJ) DNA during genetic recombination and DNA repair, while the RuvA-RuvB complex plays an important role in the rescue of blocked DNA replication forks via replication fork reversal (RFR). RuvA specifically binds to HJ cruciform DNA, conferring on it an open structure. The RuvB hexamer acts as an ATP-dependent pump, pulling dsDNA into and through the RuvAB complex. RuvB forms 2 homohexamers on either side of HJ DNA bound by 1 or 2 RuvA tetramers; 4 subunits per hexamer contact DNA at a time. Coordinated motions by a converter formed by DNA-disengaged RuvB subunits stimulates ATP hydrolysis and nucleotide exchange. Immobilization of the converter enables RuvB to convert the ATP-contained energy into a lever motion, pulling 2 nucleotides of DNA out of the RuvA tetramer per ATP hydrolyzed, thus driving DNA branch migration. The RuvB motors rotate together with the DNA substrate, which together with the progressing nucleotide cycle form the mechanistic basis for DNA recombination by continuous HJ branch migration. Branch migration allows RuvC to scan DNA until it finds its consensus sequence, where it cleaves and resolves cruciform DNA. The chain is Holliday junction branch migration complex subunit RuvB from Ralstonia nicotianae (strain ATCC BAA-1114 / GMI1000) (Ralstonia solanacearum).